The following is a 163-amino-acid chain: Calcium-binding protein I (163 aa).

3 consecutive EF-hand domains span residues 20–42 (DKNKDRQYSIDEIVQLLKKNSKN), 82–117 (KPEIDIESFLLRFDKNNDKMISHHELKTKLDELGCG), and 118–153 (NSKKTTDYVFEQIDTNKEGSLSYEDLEGFVKFLKQD). Residues Asp-95, Asn-97, Asp-99, Met-101, Glu-106, Asp-131, Asn-133, Glu-135, Ser-137, and Asp-142 each contribute to the Ca(2+) site.

The protein is Calcium-binding protein I (cbpI) of Dictyostelium discoideum (Social amoeba).